The chain runs to 518 residues: Probable malate:quinone oxidoreductase (518 aa).

Positions 495 to 518 (GAIPATTDGQSTAGTEHTPTAATV) are disordered. Polar residues predominate over residues 501–518 (TDGQSTAGTEHTPTAATV).

It belongs to the MQO family. The cofactor is FAD.

It carries out the reaction (S)-malate + a quinone = a quinol + oxaloacetate. It participates in carbohydrate metabolism; tricarboxylic acid cycle; oxaloacetate from (S)-malate (quinone route): step 1/1. The sequence is that of Probable malate:quinone oxidoreductase from Mycolicibacterium gilvum (strain PYR-GCK) (Mycobacterium gilvum (strain PYR-GCK)).